Reading from the N-terminus, the 491-residue chain is Keratin, type I cytoskeletal 24 (491 aa).

Residues Met1 to Arg23 form a disordered region. The tract at residues Met1–Ser117 is head. Over residues Gly8–Arg23 the composition is skewed to low complexity. Positions Glu118 to Trp153 are coil 1A. One can recognise an IF rod domain in the interval Glu118–Cys432. The interval Tyr154–Val174 is linker 1. Residues Ile175 to Leu266 are coil 1B. The linker 12 stretch occupies residues Gln267–Leu289. Residues Leu290–Asp428 are coil 2. A tail region spans residues Gly429–Lys491.

It belongs to the intermediate filament family. Heterotetramer of two type I and two type II keratins.

This chain is Keratin, type I cytoskeletal 24 (Krt24), found in Rattus norvegicus (Rat).